Consider the following 638-residue polypeptide: MGFSETRAYSAWGAWSTWLTICLALANLLPVTAKSAADYFVDSLPGQPEGPLVKMHAGHIEINPETSGNFFFWHFANSHIADKPRTIVWLNGGPGCSSEDGALMEIGPYRVTDDHMLNRTDGSWDEFANLLFVDQPVGTGFSYVSTGAYVSELDEMTSQFVTFMEKWFELFPHYEKDDLYFAGESYAGQYIPYIARAILDRNKKESVQAQNRQWNLKGLLIGNGWISPRHQYLSYLPYAYREGIIQGGTDASLRVEATISKCMKKLNVEDTTGTIHIADCEDILQTIVDETHKGNRCINMYDIRLTDAYSACGMNWPPDLKNIEPYLRYKNVTEALHINSDKQTGWTECSGAVGGNFRALKSKPSVELLPRLLEEGLPILLFSGQKDLICNHMGTEDMIKDMKWSGGTGFELSPGVWAPRQDWTFEGDSAGFYQQARNLTYVLFYNASHMVPFDYPRRTRDMLDKFIGVDITDIGGNPADSRIGGEKGPTTSVGGHPNSTTAAEREKEKMKSAAWKAYYKSGEVALIVVAIAAIIWGVFIWRSRRQKLRNSSHEYRGIYPMLGSSSSGSLPRFSNKRGRSADDVEAADFDETELDERLSRAVSSRSSREHEPYAIGEEDGSDREGEGSDERRGLVDKS.

The N-terminal stretch at 1 to 33 is a signal peptide; sequence MGFSETRAYSAWGAWSTWLTICLALANLLPVTA. The Lumenal segment spans residues 34–520; that stretch reads KSAADYFVDS…KSAAWKAYYK (487 aa). An N-linked (GlcNAc...) asparagine glycan is attached at Asn118. Ser185 is a catalytic residue. An N-linked (GlcNAc...) asparagine glycan is attached at Asn331. The active site involves Asp387. 2 N-linked (GlcNAc...) asparagine glycosylation sites follow: Asn438 and Asn446. The active site involves His449. Positions 477–507 are disordered; it reads NPADSRIGGEKGPTTSVGGHPNSTTAAEREK. The segment covering 489 to 502 has biased composition (polar residues); the sequence is PTTSVGGHPNSTTA. Residue Asn498 is glycosylated (N-linked (GlcNAc...) asparagine). A helical transmembrane segment spans residues 521 to 541; sequence SGEVALIVVAIAAIIWGVFIW. The Cytoplasmic segment spans residues 542–638; that stretch reads RSRRQKLRNS…DERRGLVDKS (97 aa). Residues 567 to 638 are disordered; it reads SGSLPRFSNK…DERRGLVDKS (72 aa). The segment covering 583 to 594 has biased composition (acidic residues); the sequence is DVEAADFDETEL. A compositionally biased stretch (basic and acidic residues) spans 622-638; that stretch reads DREGEGSDERRGLVDKS.

Belongs to the peptidase S10 family.

Its subcellular location is the golgi apparatus. It is found in the trans-Golgi network membrane. It carries out the reaction Preferential release of a C-terminal arginine or lysine residue.. Its function is as follows. Protease with a carboxypeptidase B-like function involved in the C-terminal processing of the lysine and arginine residues from protein precursors. Promotes cell fusion and is involved in the programmed cell death. The sequence is that of Pheromone-processing carboxypeptidase KEX1 (KEX1) from Blastomyces gilchristii (strain SLH14081) (Blastomyces dermatitidis).